The following is a 492-amino-acid chain: Proline--tRNA ligase (492 aa).

Belongs to the class-II aminoacyl-tRNA synthetase family. ProS type 3 subfamily. Homodimer.

Its subcellular location is the cytoplasm. It catalyses the reaction tRNA(Pro) + L-proline + ATP = L-prolyl-tRNA(Pro) + AMP + diphosphate. Functionally, catalyzes the attachment of proline to tRNA(Pro) in a two-step reaction: proline is first activated by ATP to form Pro-AMP and then transferred to the acceptor end of tRNA(Pro). This is Proline--tRNA ligase from Christiangramia forsetii (strain DSM 17595 / CGMCC 1.15422 / KT0803) (Gramella forsetii).